Consider the following 1206-residue polypeptide: MDTFPSLFLYSLTIQNSNYVQSSCAASLSGKKAQEIVIATESRLLIYKVDATDGRMNCILNQNCFGIIRNVAPLRLTGFKRDYLVVTSDSGRITILEYNVEKNKLVPIYQETFGKSGIRRVVPGEYLAIDAKGRAAMIASVEKNKLVYVLNRDSEANLTISSPLEAHKANNICFHLIGLDTGYANPIFAALEVDYSEIDHDSTREAFTSSEKVLSYYELDLGLNHVVKRWSKVVDRNSYMLIPVPGGNDGPSGTLVISNGWISYRHLQKAFHQIPILRRQAASANAISTPWNQVNSNSANDGPLIVSAVLHKMKGSFFYLLQTGDGDLLKLTIEHDGQGNVVELRLKYFDTVPLAVQLNILKTGFLFVATEFGNHQLYQFENLGIDDDELEITSLDFQAQDNEVGTKNVHFGVRGLQNLSLVEEIPSLYSLTDTLLMKAPSSGEANQLYTVCGRGSNSSLRQLRRGLETTEIVASELPGAPIAIWTLKLNQTDVYDSYIILSFTNGTLVLSIGETVEEISDSGFLSSVSTLNARQMGRDSLVQIHPKGIRYIRANKQTSEWKLPQDVYVVQSAINDMQIVVALSNGELVYFEMSDDVEGGQLNEYQERKTLTANVTSLALGPVQEGSRRSNFMCLACDDATVRVLSLDLYTTLENLSVQALSSPANSLCIIPMNVNGVSTLYLHIGLMNGVYLRTVIDVTSGQLLDTRTRFLGPRAVKIYPITMKNQNTVLAVSSRTFLAYSYQQNLQLSPIAYSAIDHASSFASEQCPEGIVAIQKNTLKIFTVDSLQDDLKSDIYPLICTPRKIVKHPNFPVLYILQSERNFDSFKYAQENGDVGSSYTKEKQNEHTSKSWVSFISVFDMISKKIIHESPLGDNEAAFSMTAAFFKNRDEFFLVAGSATNMDLECRTCSHGNFRVYRFHDEGKKLELISHTEIDGIPMALTPFQGRMLAGVGRFLRIYDLGNKKMLRKGELSAVPLFITHITVQASRIVVADSQYSVRFVVYKPEDNHLLTFADDTIHRWTTTNVLVDYDTLAGGDKFGNIWLLRCPEHVSKLADEENSESKLIHEKPFLNSTPHKLDLMAHFFTNDIPTSLQKVQLVEGAREVLLWTGLLGTVGVFTPFINQEDVRFFQQLEFLLRKECPPLAGRDHLAYRSYYAPVKCVIDGDLCEMYYSLPHPVQEMIANELDRTIAEVSKKIEDFRVRSF.

Belongs to the RSE1 family. As to quaternary structure, belongs to the 40S cdc5-associated complex (or cwf complex), a spliceosome sub-complex reminiscent of a late-stage spliceosome composed of the U2, U5 and U6 snRNAs and at least brr2, cdc5, cwf2/prp3, cwf3/syf1, cwf4/syf3, cwf5/ecm2, spp42/cwf6, cwf7/spf27, cwf8, cwf9, cwf10, cwf11, cwf12, prp45/cwf13, cwf14, cwf15, cwf16, cwf17, cwf18, cwf19, cwf20, cwf21, cwf22, cwf23, cwf24, cwf25, cwf26, cyp7/cwf27, cwf28, cwf29/ist3, lea1, msl1, prp5/cwf1, prp10, prp12/sap130, prp17, prp22, sap61, sap62, sap114, sap145, slu7, smb1, smd1, smd3, smf1, smg1 and syf2.

It is found in the nucleus. Functionally, involved in mRNA splicing and G2/M transition. This is Pre-mRNA-splicing factor prp12 (prp12) from Schizosaccharomyces pombe (strain 972 / ATCC 24843) (Fission yeast).